The primary structure comprises 489 residues: Acetylcholine receptor subunit beta (489 aa).

Positions 1 to 20 (NSGALLWPLIWGLLLIGTQA) are cleaved as a signal peptide. Over 21–235 (LDKEAQLRDK…ITFYLVIQRK (215 aa)) the chain is Extracellular. N-linked (GlcNAc...) asparagine glycans are attached at residues Asn-135 and Asn-161. An intrachain disulfide couples Cys-148 to Cys-162. 3 helical membrane passes run 236-260 (PLFY…VFYL), 268-286 (MTLS…LLLA), and 302-323 (YLIF…VLNL). The Cytoplasmic portion of the chain corresponds to 324–457 (HHRSPNTHHM…WQYVAMVVDR (134 aa)). Residues 458–476 (LFLWTFIAFTSLGTLSIFL) traverse the membrane as a helical segment.

This sequence belongs to the ligand-gated ion channel (TC 1.A.9) family. Acetylcholine receptor (TC 1.A.9.1) subfamily. Beta-1/CHRNB1 sub-subfamily. In terms of assembly, pentamer of two alpha chains, and one each of the beta, delta, and gamma (in immature muscle) or epsilon (in mature muscle) chains.

The protein resides in the postsynaptic cell membrane. It is found in the cell membrane. It carries out the reaction K(+)(in) = K(+)(out). The catalysed reaction is Na(+)(in) = Na(+)(out). Functionally, after binding acetylcholine, the AChR responds by an extensive change in conformation that affects all subunits and leads to opening of an ion-conducting channel across the plasma membrane. This is Acetylcholine receptor subunit beta (chrnb1) from Xenopus laevis (African clawed frog).